A 310-amino-acid chain; its full sequence is tRNA methyltransferase 10 homolog B (310 aa).

Residues 55–94 adopt a coiled-coil conformation; that stretch reads RKQRNWERRLEVKKSKRKEEKLRKKLNRQDKDVSDAQLSK. In terms of domain architecture, SAM-dependent MTase TRM10-type spans 101-298; it reads TKERLEGARA…AGIPPGKGFV (198 aa).

It belongs to the class IV-like SAM-binding methyltransferase superfamily. TRM10 family.

It carries out the reaction guanosine(9) in tRNA + S-adenosyl-L-methionine = N(1)-methylguanosine(9) in tRNA + S-adenosyl-L-homocysteine + H(+). S-adenosyl-L-methionine-dependent guanine N(1)-methyltransferase that catalyzes the formation of N(1)-methylguanine at position 9 (m1G9) in tRNAs. Probably not able to catalyze formation of N(1)-methyladenine at position 9 (m1A9) in tRNAs. The protein is tRNA methyltransferase 10 homolog B (trmt10b) of Danio rerio (Zebrafish).